A 118-amino-acid polypeptide reads, in one-letter code: Cell division protein SepF (118 aa).

The segment at 1–12 is important for localization in a ring-like structure at midcell; sequence MGIMSKILGGGG.

As to quaternary structure, homodimer. Does not oligomerize. Interacts with FtsZ2.

The protein localises to the cytoplasm. In terms of biological role, involved in cell division. Probably acts as a membrane anchor for FstZ2, tethering its filaments to the division site. May be involved in septum closure. This is Cell division protein SepF from Haloferax volcanii (strain ATCC 29605 / DSM 3757 / JCM 8879 / NBRC 14742 / NCIMB 2012 / VKM B-1768 / DS2) (Halobacterium volcanii).